Here is a 456-residue protein sequence, read N- to C-terminus: MLNSAMSVVILAAGKGTRMYSDIPKVLHTLAGKPMVQHVIDAATKLGAAQVHLVYGHGGELLKQTLKDDKLNWVLQAEQLGTGHAMQQAAPFFSDDEDILMLYGDVPLISVETLQRLRDAKPQGGIGLLTVKLDDPSGYGHITRENGKVTGIVEHKDATDEQRQIQEINTGILIANGADLKRWLSKLTNNNAQGEYYITDIIALAYQEGREIAAVHPARISETDGVNNRLQLSRLERIYQAEQAEKLLLSGVMLRDPARFDLRGTLHCGMDVEIDANVIIEGYVTLGHRVKIGAGCIIKNSVIGDDCEISPYSVVEDAHLEAACTIGPFARLRPGAELLAGAHVGNFVEMKKARLGKGSKAGHLTYLGDAEIGDNVNIGAGTITCNYDGANKFKTVIGDDVFVGSDTQLVAPVTVGKGATIAAGTTVTRNVADNELVLSRVPQVHKQGWQRPVKKK.

The tract at residues 1–229 (MLNSAMSVVI…ISETDGVNNR (229 aa)) is pyrophosphorylase. Residues 11-14 (LAAG), K25, Q76, 81-82 (GT), 103-105 (YGD), G140, E154, N169, and N227 contribute to the UDP-N-acetyl-alpha-D-glucosamine site. A Mg(2+)-binding site is contributed by D105. N227 contacts Mg(2+). The tract at residues 230-250 (LQLSRLERIYQAEQAEKLLLS) is linker. The segment at 251-456 (GVMLRDPARF…QGWQRPVKKK (206 aa)) is N-acetyltransferase. UDP-N-acetyl-alpha-D-glucosamine-binding residues include R333 and K351. The Proton acceptor role is filled by H363. The UDP-N-acetyl-alpha-D-glucosamine site is built by Y366 and N377. Residues A380, 386–387 (NY), S405, A423, and R440 contribute to the acetyl-CoA site.

In the N-terminal section; belongs to the N-acetylglucosamine-1-phosphate uridyltransferase family. This sequence in the C-terminal section; belongs to the transferase hexapeptide repeat family. As to quaternary structure, homotrimer. Requires Mg(2+) as cofactor.

The protein resides in the cytoplasm. The enzyme catalyses alpha-D-glucosamine 1-phosphate + acetyl-CoA = N-acetyl-alpha-D-glucosamine 1-phosphate + CoA + H(+). The catalysed reaction is N-acetyl-alpha-D-glucosamine 1-phosphate + UTP + H(+) = UDP-N-acetyl-alpha-D-glucosamine + diphosphate. The protein operates within nucleotide-sugar biosynthesis; UDP-N-acetyl-alpha-D-glucosamine biosynthesis; N-acetyl-alpha-D-glucosamine 1-phosphate from alpha-D-glucosamine 6-phosphate (route II): step 2/2. It functions in the pathway nucleotide-sugar biosynthesis; UDP-N-acetyl-alpha-D-glucosamine biosynthesis; UDP-N-acetyl-alpha-D-glucosamine from N-acetyl-alpha-D-glucosamine 1-phosphate: step 1/1. It participates in bacterial outer membrane biogenesis; LPS lipid A biosynthesis. Catalyzes the last two sequential reactions in the de novo biosynthetic pathway for UDP-N-acetylglucosamine (UDP-GlcNAc). The C-terminal domain catalyzes the transfer of acetyl group from acetyl coenzyme A to glucosamine-1-phosphate (GlcN-1-P) to produce N-acetylglucosamine-1-phosphate (GlcNAc-1-P), which is converted into UDP-GlcNAc by the transfer of uridine 5-monophosphate (from uridine 5-triphosphate), a reaction catalyzed by the N-terminal domain. The sequence is that of Bifunctional protein GlmU from Salmonella agona (strain SL483).